Consider the following 167-residue polypeptide: ATP synthase subunit b (167 aa).

The helical transmembrane segment at 8–28 (AEAEFWVGAGLLIFLGIVFFG) threads the bilayer.

The protein belongs to the ATPase B chain family. F-type ATPases have 2 components, F(1) - the catalytic core - and F(0) - the membrane proton channel. F(1) has five subunits: alpha(3), beta(3), gamma(1), delta(1), epsilon(1). F(0) has three main subunits: a(1), b(2) and c(10-14). The alpha and beta chains form an alternating ring which encloses part of the gamma chain. F(1) is attached to F(0) by a central stalk formed by the gamma and epsilon chains, while a peripheral stalk is formed by the delta and b chains.

The protein resides in the cell inner membrane. In terms of biological role, f(1)F(0) ATP synthase produces ATP from ADP in the presence of a proton or sodium gradient. F-type ATPases consist of two structural domains, F(1) containing the extramembraneous catalytic core and F(0) containing the membrane proton channel, linked together by a central stalk and a peripheral stalk. During catalysis, ATP synthesis in the catalytic domain of F(1) is coupled via a rotary mechanism of the central stalk subunits to proton translocation. Its function is as follows. Component of the F(0) channel, it forms part of the peripheral stalk, linking F(1) to F(0). In Phenylobacterium zucineum (strain HLK1), this protein is ATP synthase subunit b.